Consider the following 383-residue polypeptide: tRNA-specific 2-thiouridylase MnmA (383 aa).

Residues 30 to 37 (GLSGGVDS) and Leu-56 each bind ATP. Residue Cys-117 is the Nucleophile of the active site. An intrachain disulfide couples Cys-117 to Cys-216. Gly-142 contacts ATP. Positions 166-168 (KDQ) are interaction with tRNA. Catalysis depends on Cys-216, which acts as the Cysteine persulfide intermediate. The tract at residues 321-322 (RY) is interaction with tRNA.

It belongs to the MnmA/TRMU family.

The protein resides in the cytoplasm. The catalysed reaction is S-sulfanyl-L-cysteinyl-[protein] + uridine(34) in tRNA + AH2 + ATP = 2-thiouridine(34) in tRNA + L-cysteinyl-[protein] + A + AMP + diphosphate + H(+). In terms of biological role, catalyzes the 2-thiolation of uridine at the wobble position (U34) of tRNA, leading to the formation of s(2)U34. In Synechococcus sp. (strain CC9605), this protein is tRNA-specific 2-thiouridylase MnmA.